A 328-amino-acid chain; its full sequence is PLASTID TRANSCRIPTIONALLY ACTIVE protein 6, chloroplastic (328 aa).

Residues 1–14 (MASSAASPSLSLLS) show a composition bias toward low complexity. Residues 1–21 (MASSAASPSLSLLSFTSKPPY) form a disordered region. A chloroplast-targeting transit peptide spans 1 to 59 (MASSAASPSLSLLSFTSKPPYPSGSQRLFASFRTDGLFAPLTLKSRRGRGIVVKVDDVD). The Nuclear localization signal signature appears at 267–275 (RKRDRKDDL). The RNA binding domain motif lies at 301–319 (EREEWTKTREDMEKHLRKL).

In terms of assembly, subunit of the plastid-encoded RNA polymerase (PEP) complex. Component of a large nuclear subcomplex that may include other PEP subunits (e.g. PTAC12/HMR/PAP5, PTAC14/PAP7 and PTAC7/PAP12). Binds directly to PTAC12/HMR/PAP5 in the nucleus. Interacts with MTERF5. Mostly expressed in rosette leaves, stems and flowers, and, to a lower extent, in roots and cauline leaves.

The protein resides in the plastid. It is found in the chloroplast. It localises to the chloroplast thylakoid. Its subcellular location is the nucleus. The protein localises to the nucleoplasm. In terms of biological role, essential protein involved in plastid gene expression and in chloroplast biogenesis. Links photomorphogenesis and chloroplast biogenesis through its dual localization; required for the formation of late photobodies in the nucleus, as well as for phytochrome B-mediated signaling cascade and subsequent reshaping of the plastid-encoded RNA polymerase (PEP) activity. Binds RNA via specific recognition motifs of viral origin. Recruited by MTERF5 to the transcriptionally paused region of psbEFLJ. Promotes leaf greening. The protein is PLASTID TRANSCRIPTIONALLY ACTIVE protein 6, chloroplastic of Arabidopsis thaliana (Mouse-ear cress).